Reading from the N-terminus, the 225-residue chain is NAD(P)H-quinone oxidoreductase subunit K, chloroplastic (225 aa).

Positions 43, 44, 108, and 139 each coordinate [4Fe-4S] cluster.

It belongs to the complex I 20 kDa subunit family. As to quaternary structure, NDH is composed of at least 16 different subunits, 5 of which are encoded in the nucleus. [4Fe-4S] cluster is required as a cofactor.

It localises to the plastid. The protein resides in the chloroplast thylakoid membrane. It catalyses the reaction a plastoquinone + NADH + (n+1) H(+)(in) = a plastoquinol + NAD(+) + n H(+)(out). The enzyme catalyses a plastoquinone + NADPH + (n+1) H(+)(in) = a plastoquinol + NADP(+) + n H(+)(out). In terms of biological role, NDH shuttles electrons from NAD(P)H:plastoquinone, via FMN and iron-sulfur (Fe-S) centers, to quinones in the photosynthetic chain and possibly in a chloroplast respiratory chain. The immediate electron acceptor for the enzyme in this species is believed to be plastoquinone. Couples the redox reaction to proton translocation, and thus conserves the redox energy in a proton gradient. This chain is NAD(P)H-quinone oxidoreductase subunit K, chloroplastic, found in Nicotiana tabacum (Common tobacco).